Reading from the N-terminus, the 534-residue chain is 2,3-bisphosphoglycerate-independent phosphoglycerate mutase (534 aa).

The Mn(2+) site is built by Asp15 and Ser65. Residue Ser65 is the Phosphoserine intermediate of the active site. Residues His126, 156 to 157 (RD), Arg188, Arg194, 260 to 263 (RPDR), and Lys333 each bind substrate. Mn(2+)-binding residues include Asp400, His404, Asp441, His442, and His459.

Belongs to the BPG-independent phosphoglycerate mutase family. As to quaternary structure, monomer. It depends on Mn(2+) as a cofactor.

It catalyses the reaction (2R)-2-phosphoglycerate = (2R)-3-phosphoglycerate. It functions in the pathway carbohydrate degradation; glycolysis; pyruvate from D-glyceraldehyde 3-phosphate: step 3/5. Functionally, catalyzes the interconversion of 2-phosphoglycerate and 3-phosphoglycerate. This Acaryochloris marina (strain MBIC 11017) protein is 2,3-bisphosphoglycerate-independent phosphoglycerate mutase.